Here is a 162-residue protein sequence, read N- to C-terminus: MVFICLYFEVHGIYNKNEKLFDRIYCNSNGHILEVCRKLKTQDFWFSEFGDKPYYFFSNKVSTYCKIGGNDIGEFEYYLLDIFLYGPLKFKVNDIYDFNMIGALERRQRYSEMIEREKKNKNKFKIVFYFFQKKYKLLLENRFLVKERLTTKNNLIVYIWYW.

The protein belongs to the A.longa ORF167/ORF288 family.

It is found in the plastid. This is an uncharacterized protein from Euglena longa (Euglenophycean alga).